The primary structure comprises 372 residues: Enolase (372 aa).

Residues histidine 95 and glutamate 104 each coordinate substrate. Glutamate 147 serves as the catalytic Proton donor. Residues aspartate 182, glutamate 232, and aspartate 257 each coordinate Mg(2+). Residues glutamate 232 and aspartate 257 each coordinate substrate. Lysine 282 acts as the Proton acceptor in catalysis. Substrate contacts are provided by residues 309–312 and lysine 333; that span reads SHRS.

This sequence belongs to the enolase family. Homodimer. It depends on Mg(2+) as a cofactor.

Its subcellular location is the cytoplasm. The enzyme catalyses (2R)-2-phosphoglycerate = phosphoenolpyruvate + H2O. The protein operates within carbohydrate degradation; glycolysis; pyruvate from D-glyceraldehyde 3-phosphate: step 4/5. The sequence is that of Enolase (ENO) from Chlamydomonas reinhardtii (Chlamydomonas smithii).